The primary structure comprises 276 residues: Putative ankyrin repeat protein R838 (276 aa).

ANK repeat units lie at residues 134–163, 164–193, 195–223, and 225–253; these read DGDN…DPRS, DYDY…DISS, NHWP…DVRA, and NYNP…EIGS. A disordered region spans residues 254–276; the sequence is VSDDDTYDSDSSDYSEDDSESIN. Positions 255-276 are enriched in acidic residues; the sequence is SDDDTYDSDSSDYSEDDSESIN.

The protein is Putative ankyrin repeat protein R838 of Acanthamoeba polyphaga (Amoeba).